We begin with the raw amino-acid sequence, 61 residues long: Ferredoxin (61 aa).

The region spanning L2–E28 is the 4Fe-4S ferredoxin-type domain. C8, C11, C14, C18, C37, C40, C49, and C53 together coordinate [4Fe-4S] cluster.

[4Fe-4S] cluster is required as a cofactor.

Ferredoxins are iron-sulfur proteins that transfer electrons in a wide variety of metabolic reactions. The polypeptide is Ferredoxin (Chlorobaculum thiosulfatiphilum (Chlorobium limicola f.sp. thiosulfatophilum)).